A 307-amino-acid chain; its full sequence is N-acetylmuramic acid 6-phosphate etherase (307 aa).

One can recognise an SIS domain in the interval I62–K225. E90 acts as the Proton donor in catalysis. E121 is a catalytic residue.

Belongs to the GCKR-like family. MurNAc-6-P etherase subfamily. Homodimer.

It catalyses the reaction N-acetyl-D-muramate 6-phosphate + H2O = N-acetyl-D-glucosamine 6-phosphate + (R)-lactate. The protein operates within amino-sugar metabolism; 1,6-anhydro-N-acetylmuramate degradation. It participates in amino-sugar metabolism; N-acetylmuramate degradation. It functions in the pathway cell wall biogenesis; peptidoglycan recycling. Functionally, specifically catalyzes the cleavage of the D-lactyl ether substituent of MurNAc 6-phosphate, producing GlcNAc 6-phosphate and D-lactate. Together with AnmK, is also required for the utilization of anhydro-N-acetylmuramic acid (anhMurNAc) either imported from the medium or derived from its own cell wall murein, and thus plays a role in cell wall recycling. The chain is N-acetylmuramic acid 6-phosphate etherase from Pseudoalteromonas atlantica (strain T6c / ATCC BAA-1087).